The chain runs to 158 residues: G-protein-signaling modulator 3 (158 aa).

The tract at residues 1–53 is disordered; that stretch reads MEAERPQEDGEQSLPQDDQGWPPVNSTARPWRSAPPSPPPPGTRHTALGPRSG. Phosphoserine is present on residues Ser-33 and Ser-37. Residues 33–42 are compositionally biased toward pro residues; the sequence is SAPPSPPPPG. Residues 43-53 show a composition bias toward low complexity; that stretch reads TRHTALGPRSG. Ser-54 and Ser-57 each carry phosphoserine. Thr-60 carries the post-translational modification Phosphothreonine. Positions 60 to 82 constitute a GoLoco 1 domain; the sequence is TELLLDLVAEAQSRRLEEQRAAF. A disordered region spans residues 78-97; sequence QRAAFHTPKVPPSLAPTPPR. Residues 86 to 96 show a composition bias toward pro residues; that stretch reads KVPPSLAPTPP. GoLoco domains follow at residues 102-124 and 130-153; these read KEQL…RSDP and GQEL…RSRP.

It is found in the cytoplasm. Interacts with subunit of G(i) alpha proteins and regulates the activation of G(i) alpha proteins. This is G-protein-signaling modulator 3 (Gpsm3) from Rattus norvegicus (Rat).